A 220-amino-acid polypeptide reads, in one-letter code: Thymidylate kinase (220 aa).

Residue 10-17 (GIDGCGKS) participates in ATP binding.

Belongs to the thymidylate kinase family.

The catalysed reaction is dTMP + ATP = dTDP + ADP. Phosphorylation of dTMP to form dTDP in both de novo and salvage pathways of dTTP synthesis. This is Thymidylate kinase from Prochlorococcus marinus (strain SARG / CCMP1375 / SS120).